Consider the following 274-residue polypeptide: Trypsin-1 (274 aa).

Positions 1 to 18 are cleaved as a signal peptide; sequence MSNKIAILLAVLVAVVAC. Positions 19 to 47 are cleaved as a propeptide — activation peptide; that stretch reads AEAQANQRHRLVRPSPSFSPRPRYAVGQR. The region spanning 48–273 is the Peptidase S1 domain; that stretch reads IVGGFEIDVS…VRDWVRENSG (226 aa). Cysteine 73 and cysteine 89 are oxidised to a cystine. Residues histidine 88 and aspartate 133 each act as charge relay system in the active site. Disulfide bonds link cysteine 198-cysteine 214 and cysteine 225-cysteine 249. The Charge relay system role is filled by serine 229.

Belongs to the peptidase S1 family. Constitutively expressed at low level in the gut of adult females. Also expressed in the gut of male and female pupae.

The protein localises to the secreted. The enzyme catalyses Preferential cleavage: Arg-|-Xaa, Lys-|-Xaa.. Its function is as follows. Major function may be to aid in digestion of the blood meal. The polypeptide is Trypsin-1 (TRYP1) (Anopheles gambiae (African malaria mosquito)).